The chain runs to 259 residues: Thiazole synthase (259 aa).

Residue Lys95 is the Schiff-base intermediate with DXP of the active site. 1-deoxy-D-xylulose 5-phosphate-binding positions include Gly156, 182 to 183 (AG), and 204 to 205 (AS).

The protein belongs to the ThiG family. In terms of assembly, homotetramer. Forms heterodimers with either ThiH or ThiS.

Its subcellular location is the cytoplasm. The enzyme catalyses [ThiS sulfur-carrier protein]-C-terminal-Gly-aminoethanethioate + 2-iminoacetate + 1-deoxy-D-xylulose 5-phosphate = [ThiS sulfur-carrier protein]-C-terminal Gly-Gly + 2-[(2R,5Z)-2-carboxy-4-methylthiazol-5(2H)-ylidene]ethyl phosphate + 2 H2O + H(+). Its pathway is cofactor biosynthesis; thiamine diphosphate biosynthesis. Its function is as follows. Catalyzes the rearrangement of 1-deoxy-D-xylulose 5-phosphate (DXP) to produce the thiazole phosphate moiety of thiamine. Sulfur is provided by the thiocarboxylate moiety of the carrier protein ThiS. In vitro, sulfur can be provided by H(2)S. The protein is Thiazole synthase of Corynebacterium efficiens (strain DSM 44549 / YS-314 / AJ 12310 / JCM 11189 / NBRC 100395).